A 166-amino-acid polypeptide reads, in one-letter code: Peptidyl-prolyl cis-trans isomerase-like 1 (166 aa).

The 155-residue stretch at 10–164 folds into the PPIase cyclophilin-type domain; it reads QPPNVYLETS…DDVKIIKAYP (155 aa). Residues 54–65, 70–71, 99–104, 109–113, T119, and K125 contribute to the cyclosporin A site; these read HRIIKDFMIQGG, TG, AMANAG, and GSQFF. At S149 the chain carries Phosphoserine.

It belongs to the cyclophilin-type PPIase family. PPIL1 subfamily. In terms of assembly, identified in the spliceosome C complex. Interacts with SNW1/SKIP. Interacts with CDC40/PRP17; this interaction leads to CDC40 isomerization. Interacts with RBM22.

It is found in the nucleus. It carries out the reaction [protein]-peptidylproline (omega=180) = [protein]-peptidylproline (omega=0). With respect to regulation, inhibited by Cyclosporin A. Functionally, involved in pre-mRNA splicing as component of the spliceosome. PPIases accelerate the folding of proteins. It catalyzes the cis-trans isomerization of proline imidic peptide bonds in oligopeptides. Catalyzes prolyl peptide bond isomerization in CDC40/PRP17. Plays an important role in embryonic brain development; this function is independent of its isomerase activity. This chain is Peptidyl-prolyl cis-trans isomerase-like 1 (PPIL1), found in Bos taurus (Bovine).